Reading from the N-terminus, the 526-residue chain is Radial spoke head protein 6 homolog A (526 aa).

Disordered regions lie at residues 180–231 (EGED…EENG), 371–411 (VKSE…DAEI), and 469–526 (PPAP…EEDD). Composition is skewed to acidic residues over residues 181–212 (GEDD…EAED) and 374–395 (EEEE…EPEP). Residues 497-506 (QALKAAKEEA) are compositionally biased toward basic and acidic residues. The span at 507-526 (EAAAEEMEEEEDEEEEEEDD) shows a compositional bias: acidic residues.

It belongs to the flagellar radial spoke RSP4/6 family. Component of sperm axonemal radial spoke complexes.

The protein localises to the cytoplasm. Its subcellular location is the cytoskeleton. It localises to the flagellum axoneme. Functions as part of radial spoke complexes in the axoneme of sperm flagella that play an important part in motility. The triple radial spokes (RS1, RS2 and RS3) are required to modulate beating of the sperm flagellum. This chain is Radial spoke head protein 6 homolog A (rsph6a), found in Xenopus tropicalis (Western clawed frog).